Here is a 414-residue protein sequence, read N- to C-terminus: Probable cell wall biosynthesis protein LcpB (414 aa).

The disordered stretch occupies residues 1-108 (MDSPGQGEIA…PPVIAGDGGR (108 aa)). At 1–120 (MDSPGQGEIA…KAISFKPRGC (120 aa)) the chain is on the cytoplasmic side. Over residues 9-23 (IARDSQGRPILDRYG) the composition is skewed to basic and acidic residues. Residues 33-42 (RQTPPTPRTP) are compositionally biased toward pro residues. The span at 43–53 (PVNETRVYQPR) shows a compositional bias: low complexity. Over residues 54–80 (QTPPRQTPPRQTPPRQMPPRQTPPRQV) the composition is skewed to pro residues. Residues 121-141 (LGTIAGVLAVGLVLVFVVTLW) form a helical membrane-spanning segment. Topologically, residues 142 to 414 (ADSKLNRVDA…GAEALFSSMR (273 aa)) are periplasmic.

Belongs to the LytR/CpsA/Psr (LCP) family.

It localises to the cell inner membrane. The protein is Probable cell wall biosynthesis protein LcpB of Corynebacterium glutamicum (strain ATCC 13032 / DSM 20300 / JCM 1318 / BCRC 11384 / CCUG 27702 / LMG 3730 / NBRC 12168 / NCIMB 10025 / NRRL B-2784 / 534).